The sequence spans 512 residues: Cytochrome P450 monooxygenase ABA1 (512 aa).

The chain crosses the membrane as a helical span at residues 13 to 32 (HWLSGILAIATVYLATSYII). Heme is bound at residue cysteine 458.

This sequence belongs to the cytochrome P450 family. Heme serves as cofactor.

It is found in the membrane. The protein operates within hormone biosynthesis. Its function is as follows. Cytochrome P450 monooxygenase involved in the biosynthesis of abscisic acid (ABA), a phytohormone that acts antagonistically toward salicylic acid (SA), jasmonic acid (JA) and ethylene (ETH) signaling, to impede plant defense responses. During pathogen-host interaction, ABA plays a dual role in disease severity by increasing plant susceptibility and accelerating pathogenesis in the fungus itself. The first step of the pathway catalyzes the reaction from farnesyl diphosphate to alpha-ionylideneethane performed by the alpha-ionylideneethane synthase ABA3 via a three-step reaction mechanism involving 2 neutral intermediates, beta-farnesene and allofarnesene. The cytochrome P450 monooxygenase ABA1 might then be involved in the conversion of alpha-ionylideneethane to alpha-ionylideneacetic acid. Alpha-ionylideneacetic acid is further converted to abscisic acid in 2 steps involving the cytochrome P450 monooxygenase ABA2 and the short-chain dehydrogenase/reductase ABA4, via the intermediates 1'-deoxy-ABA or 1',4'-trans-diol-ABA, depending on the order of action of these 2 enzymes. ABA2 is responsible for the hydroxylation of carbon atom C-1' and ABA4 might be involved in the oxidation of the C-4' carbon atom. This is Cytochrome P450 monooxygenase ABA1 from Pyricularia oryzae (strain Y34) (Rice blast fungus).